Consider the following 107-residue polypeptide: Large ribosomal subunit protein uL18c (107 aa).

The protein belongs to the universal ribosomal protein uL18 family. Part of the 50S ribosomal subunit; contacts the 5S rRNA.

It localises to the plastid. It is found in the chloroplast. Functionally, binds 5S rRNA, forms part of the central protuberance of the 50S subunit. The chain is Large ribosomal subunit protein uL18c (rpl18) from Guillardia theta (Cryptophyte).